Consider the following 237-residue polypeptide: LexA repressor (237 aa).

The H-T-H motif DNA-binding region spans 26–46 (FDEMKDALDLRSKSGIHRLIT). Catalysis depends on for autocatalytic cleavage activity residues Ser158 and Lys196.

It belongs to the peptidase S24 family. As to quaternary structure, homodimer.

The catalysed reaction is Hydrolysis of Ala-|-Gly bond in repressor LexA.. Represses a number of genes involved in the response to DNA damage (SOS response), including recA and lexA. In the presence of single-stranded DNA, RecA interacts with LexA causing an autocatalytic cleavage which disrupts the DNA-binding part of LexA, leading to derepression of the SOS regulon and eventually DNA repair. The protein is LexA repressor of Rhodopseudomonas palustris (strain BisB18).